The primary structure comprises 272 residues: Indole-3-glycerol phosphate synthase (272 aa).

Belongs to the TrpC family.

The enzyme catalyses 1-(2-carboxyphenylamino)-1-deoxy-D-ribulose 5-phosphate + H(+) = (1S,2R)-1-C-(indol-3-yl)glycerol 3-phosphate + CO2 + H2O. The protein operates within amino-acid biosynthesis; L-tryptophan biosynthesis; L-tryptophan from chorismate: step 4/5. In Mycobacterium ulcerans (strain Agy99), this protein is Indole-3-glycerol phosphate synthase.